The following is a 61-amino-acid chain: Small ribosomal subunit protein uS14 (61 aa).

The Zn(2+) site is built by Cys24, Cys27, Cys40, and Cys43.

This sequence belongs to the universal ribosomal protein uS14 family. Zinc-binding uS14 subfamily. In terms of assembly, part of the 30S ribosomal subunit. Contacts proteins S3 and S10. Zn(2+) serves as cofactor.

Binds 16S rRNA, required for the assembly of 30S particles and may also be responsible for determining the conformation of the 16S rRNA at the A site. In Sulfurovum sp. (strain NBC37-1), this protein is Small ribosomal subunit protein uS14.